Reading from the N-terminus, the 557-residue chain is NADH-quinone oxidoreductase subunit C/D (557 aa).

The span at 1 to 13 (MSLEEQQSDDPAE) shows a compositional bias: acidic residues. A disordered region spans residues 1-20 (MSLEEQQSDDPAELESGVSR). Residues 1–174 (MSLEEQQSDD…ATLREHANPL (174 aa)) are NADH dehydrogenase I subunit C. Residues 184-557 (NTMYINIGPH…LDIVLGEVDR (374 aa)) form an NADH dehydrogenase I subunit D region. Lys-517 participates in a covalent cross-link: Glycyl lysine isopeptide (Lys-Gly) (interchain with G-Cter in SAMP2).

This sequence in the N-terminal section; belongs to the complex I 30 kDa subunit family. It in the C-terminal section; belongs to the complex I 49 kDa subunit family. NDH-1 is composed of 13 different subunits. Subunits NuoB, CD, E, F, and G constitute the peripheral sector of the complex.

The protein resides in the cell membrane. The enzyme catalyses a quinone + NADH + 5 H(+)(in) = a quinol + NAD(+) + 4 H(+)(out). Functionally, NDH-1 shuttles electrons from NADH, via FMN and iron-sulfur (Fe-S) centers, to quinones in the respiratory chain. Couples the redox reaction to proton translocation (for every two electrons transferred, four hydrogen ions are translocated across the cytoplasmic membrane), and thus conserves the redox energy in a proton gradient. The chain is NADH-quinone oxidoreductase subunit C/D (nuoCD) from Haloferax volcanii (strain ATCC 29605 / DSM 3757 / JCM 8879 / NBRC 14742 / NCIMB 2012 / VKM B-1768 / DS2) (Halobacterium volcanii).